A 1893-amino-acid chain; its full sequence is Protein TIC 214 (1893 aa).

6 helical membrane passes run 18–38 (IINS…FSIG), 63–83 (AITG…YAPL), 87–107 (LGRP…HFFW), 127–147 (LSIQ…HFIL), 175–195 (VGWL…LVWI), and 224–244 (IFSI…PSPI). Basic and acidic residues-rich tracts occupy residues 249-258 (MKETSETEER) and 268-287 (EIER…RSTE). Positions 249–317 (MKETSETEER…TEEIRVNGKE (69 aa)) are disordered. Positions 298-309 (EKEDPDKIDETE) are enriched in acidic residues. A helical transmembrane segment spans residues 1126–1146 (LHYFIKFFIERIYIDILLCLI).

The protein belongs to the TIC214 family. In terms of assembly, part of the Tic complex.

It is found in the plastid. It localises to the chloroplast inner membrane. Its function is as follows. Involved in protein precursor import into chloroplasts. May be part of an intermediate translocation complex acting as a protein-conducting channel at the inner envelope. This Vitis vinifera (Grape) protein is Protein TIC 214.